A 231-amino-acid chain; its full sequence is tRNA (guanine-N(1)-)-methyltransferase (231 aa).

S-adenosyl-L-methionine-binding positions include Gly-112 and 132-137; that span reads LGDFVL.

This sequence belongs to the RNA methyltransferase TrmD family. Homodimer.

It is found in the cytoplasm. It carries out the reaction guanosine(37) in tRNA + S-adenosyl-L-methionine = N(1)-methylguanosine(37) in tRNA + S-adenosyl-L-homocysteine + H(+). Functionally, specifically methylates guanosine-37 in various tRNAs. This Gloeothece citriformis (strain PCC 7424) (Cyanothece sp. (strain PCC 7424)) protein is tRNA (guanine-N(1)-)-methyltransferase.